Here is a 910-residue protein sequence, read N- to C-terminus: Protein kinase 3 (910 aa).

The span at 119 to 129 (SPSGGGGGGSG) shows a compositional bias: gly residues. Disordered regions lie at residues 119–239 (SPSG…PNLI), 270–295 (FNNN…KTPT), and 391–454 (NKDD…NDKK). Composition is skewed to low complexity over residues 130 to 160 (VSSN…QPTS), 169 to 196 (LSES…QSTS), 209 to 220 (GLSGSSTSSSSA), 227 to 239 (NNNA…PNLI), 270 to 290 (FNNN…TTST), and 422 to 450 (INQP…TSQT). The region spanning 498–763 (FELLKVLGVG…FEEISSHPFF (266 aa)) is the Protein kinase domain. ATP is bound by residues 504–512 (LGVGSFGRV) and Lys527. Residue Asp621 is the Proton acceptor of the active site. Thr664 carries the post-translational modification Phosphothreonine; by autocatalysis. The region spanning 764–854 (ELIPWRMLES…NKEEEDGIMG (91 aa)) is the AGC-kinase C-terminal domain. 2 disordered regions span residues 786–812 (EISL…TLSC) and 859–910 (IGSI…KGSV). 2 stretches are compositionally biased toward low complexity: residues 788–809 (SLPN…NNLT) and 859–886 (IGSI…SGGS).

The protein belongs to the protein kinase superfamily. AGC Ser/Thr protein kinase family.

It catalyses the reaction L-seryl-[protein] + ATP = O-phospho-L-seryl-[protein] + ADP + H(+). The catalysed reaction is L-threonyl-[protein] + ATP = O-phospho-L-threonyl-[protein] + ADP + H(+). In Dictyostelium discoideum (Social amoeba), this protein is Protein kinase 3 (pkgC).